A 232-amino-acid chain; its full sequence is Uracil phosphoribosyltransferase (232 aa).

Lys-38–Arg-42 contacts GTP. Residues Arg-87, Arg-112, and Asp-140–Thr-148 each bind 5-phospho-alpha-D-ribose 1-diphosphate. Uracil contacts are provided by residues Ile-204 and Gly-209 to Ala-211. Asp-210 lines the 5-phospho-alpha-D-ribose 1-diphosphate pocket.

It belongs to the UPRTase family. It depends on Mg(2+) as a cofactor.

It catalyses the reaction UMP + diphosphate = 5-phospho-alpha-D-ribose 1-diphosphate + uracil. It functions in the pathway pyrimidine metabolism; UMP biosynthesis via salvage pathway; UMP from uracil: step 1/1. Its activity is regulated as follows. Allosterically activated by GTP. Catalyzes the conversion of uracil and 5-phospho-alpha-D-ribose 1-diphosphate (PRPP) to UMP and diphosphate. This chain is Uracil phosphoribosyltransferase, found in Methanococcus vannielii (strain ATCC 35089 / DSM 1224 / JCM 13029 / OCM 148 / SB).